A 353-amino-acid polypeptide reads, in one-letter code: Histidinol-phosphate aminotransferase (353 aa).

K211 carries the N6-(pyridoxal phosphate)lysine modification.

It belongs to the class-II pyridoxal-phosphate-dependent aminotransferase family. Histidinol-phosphate aminotransferase subfamily. Homodimer. Pyridoxal 5'-phosphate is required as a cofactor.

The enzyme catalyses L-histidinol phosphate + 2-oxoglutarate = 3-(imidazol-4-yl)-2-oxopropyl phosphate + L-glutamate. Its pathway is amino-acid biosynthesis; L-histidine biosynthesis; L-histidine from 5-phospho-alpha-D-ribose 1-diphosphate: step 7/9. The chain is Histidinol-phosphate aminotransferase from Marinomonas sp. (strain MWYL1).